A 502-amino-acid polypeptide reads, in one-letter code: Probable mitochondrial-processing peptidase subunit alpha (502 aa).

Belongs to the peptidase M16 family. As to quaternary structure, heterodimer of mas2 (alpha) and mas1 (beta) subunits, forming the mitochondrial processing protease (MPP) in which mas2 is involved in substrate recognition and binding and mas1 is the catalytic subunit.

It is found in the mitochondrion matrix. Functionally, substrate recognition and binding subunit of the essential mitochondrial processing protease (MPP), which cleaves the mitochondrial sequence off newly imported precursors proteins. In Schizosaccharomyces pombe (strain 972 / ATCC 24843) (Fission yeast), this protein is Probable mitochondrial-processing peptidase subunit alpha (mas2).